The chain runs to 500 residues: MFDRPLKILFVSSEVVPFAKTGGLADVAGSLPKALATVVDHGLSHHDVRVAMPRYKMIEDARYVTDFPVWFADKNHEAIIRQREIEAQFQGARHTVPVYMIDNYQYYYRDGIYVFDDEAERFGFFCKAVLEMLPRLGWQPDVIHCNDWQCGPIPLFLKTHYRGDPFFSRMATVFTIHNLQYQGNFPKEVLHMLGLGKEYFRPEALEFYGSVSFMKAGIQYADVLTTVSRTYAREIQTPEYGQRMEGVLRQRAHELYGIVNGINYHEFDPKTDPRLHRNYDVDHWEHKKENKFTLQREMNLPVRDVPVLGLITRLVDQKGLDLIAEIIDELMRLDIQMVILGKGDKYYEDMFREMKVQHPGKIAAHIGFNVVLAQRIYAGSDMFLMPSRFEPCGLGQLISLRYGTIPIVRETGGLADTVNEYDLATGGGNGFVFKEYDARALYSAIARALKLYREDQEAWGRLVRNAMEMDFSWARSAVEYLQVYRDAMEKVSEERGIRIA.

An ADP-alpha-D-glucose-binding site is contributed by Lys20.

Belongs to the glycosyltransferase 1 family. Bacterial/plant glycogen synthase subfamily.

The enzyme catalyses [(1-&gt;4)-alpha-D-glucosyl](n) + ADP-alpha-D-glucose = [(1-&gt;4)-alpha-D-glucosyl](n+1) + ADP + H(+). Its pathway is glycan biosynthesis; glycogen biosynthesis. Functionally, synthesizes alpha-1,4-glucan chains using ADP-glucose. The polypeptide is Glycogen synthase (Desulforudis audaxviator (strain MP104C)).